Consider the following 476-residue polypeptide: Cysteine--tRNA ligase (476 aa).

A Zn(2+)-binding site is contributed by cysteine 28. Residues 30–40 (VTTYDFCHIGH) carry the 'HIGH' region motif. The Zn(2+) site is built by cysteine 215, histidine 241, and glutamate 245. Residues 273 to 277 (KMSKS) carry the 'KMSKS' region motif. Lysine 276 lines the ATP pocket.

Belongs to the class-I aminoacyl-tRNA synthetase family. As to quaternary structure, monomer. It depends on Zn(2+) as a cofactor.

The protein localises to the cytoplasm. It catalyses the reaction tRNA(Cys) + L-cysteine + ATP = L-cysteinyl-tRNA(Cys) + AMP + diphosphate. The chain is Cysteine--tRNA ligase from Buchnera aphidicola subsp. Cinara cedri (strain Cc).